Consider the following 203-residue polypeptide: uncharacterized protein (203 aa).

This is an uncharacterized protein from Chlorobium limicola.